The sequence spans 351 residues: Histidinol-phosphate aminotransferase (351 aa).

N6-(pyridoxal phosphate)lysine is present on Lys-213.

Belongs to the class-II pyridoxal-phosphate-dependent aminotransferase family. Histidinol-phosphate aminotransferase subfamily. Homodimer. The cofactor is pyridoxal 5'-phosphate.

It catalyses the reaction L-histidinol phosphate + 2-oxoglutarate = 3-(imidazol-4-yl)-2-oxopropyl phosphate + L-glutamate. Its pathway is amino-acid biosynthesis; L-histidine biosynthesis; L-histidine from 5-phospho-alpha-D-ribose 1-diphosphate: step 7/9. This Thermoanaerobacter pseudethanolicus (strain ATCC 33223 / 39E) (Clostridium thermohydrosulfuricum) protein is Histidinol-phosphate aminotransferase.